A 186-amino-acid polypeptide reads, in one-letter code: Peptidyl-tRNA hydrolase (186 aa).

Y14 serves as a coordination point for tRNA. H19 serves as the catalytic Proton acceptor. Residues Y64, N66, and N112 each coordinate tRNA.

This sequence belongs to the PTH family. As to quaternary structure, monomer.

It localises to the cytoplasm. The enzyme catalyses an N-acyl-L-alpha-aminoacyl-tRNA + H2O = an N-acyl-L-amino acid + a tRNA + H(+). Hydrolyzes ribosome-free peptidyl-tRNAs (with 1 or more amino acids incorporated), which drop off the ribosome during protein synthesis, or as a result of ribosome stalling. Functionally, catalyzes the release of premature peptidyl moieties from peptidyl-tRNA molecules trapped in stalled 50S ribosomal subunits, and thus maintains levels of free tRNAs and 50S ribosomes. The protein is Peptidyl-tRNA hydrolase of Bacillus cereus (strain ATCC 10987 / NRS 248).